Consider the following 355-residue polypeptide: G protein alpha i subunit (355 aa).

Residue G2 is the site of N-myristoyl glycine attachment. C3 carries S-palmitoyl cysteine lipidation. The G-alpha domain maps to 33 to 355 (SEVKLLLLGA…KNNLKQIGLF (323 aa)). A G1 motif region spans residues 36–49 (KLLLLGAGESGKST). Residues 41-48 (GAGESGKS), 176-182 (LRTRVKT), 201-205 (DVGGQ), 270-273 (NKKD), and A327 each bind GTP. Positions 48 and 182 each coordinate Mg(2+). Residues 174 to 182 (DVLRTRVKT) are G2 motif. Positions 197 to 206 (FKLFDVGGQR) are G3 motif. The segment at 266 to 273 (ILFLNKKD) is G4 motif. The interval 325-330 (TCATDT) is G5 motif.

This sequence belongs to the G-alpha family. G(i/o/t/z) subfamily. G proteins are composed of 3 units; alpha, beta and gamma. The alpha chain contains the guanine nucleotide binding site. Interacts (via GDP- or GTP-bound forms) with loco (via GoLoco and RGS domains). Interacts with raps/pins.

It localises to the cell membrane. It is found in the apical cell membrane. Functionally, guanine nucleotide-binding proteins (G proteins) are involved as modulators or transducers in various transmembrane signaling systems. Plays a role in glial cell differentiation during embryogenesis; loco, Galphao and the G-protein coupled receptor, moody, are required in the surface glia to achieve effective insulation of the nerve cord. The sequence is that of G protein alpha i subunit (Galphai) from Drosophila melanogaster (Fruit fly).